We begin with the raw amino-acid sequence, 303 residues long: Sulfate adenylyltransferase subunit 2 (303 aa).

This sequence belongs to the PAPS reductase family. CysD subfamily. Heterodimer composed of CysD, the smaller subunit, and CysN.

It catalyses the reaction sulfate + ATP + H(+) = adenosine 5'-phosphosulfate + diphosphate. It functions in the pathway sulfur metabolism; hydrogen sulfide biosynthesis; sulfite from sulfate: step 1/3. Functionally, with CysN forms the ATP sulfurylase (ATPS) that catalyzes the adenylation of sulfate producing adenosine 5'-phosphosulfate (APS) and diphosphate, the first enzymatic step in sulfur assimilation pathway. APS synthesis involves the formation of a high-energy phosphoric-sulfuric acid anhydride bond driven by GTP hydrolysis by CysN coupled to ATP hydrolysis by CysD. In Sulfurimonas denitrificans (strain ATCC 33889 / DSM 1251) (Thiomicrospira denitrificans (strain ATCC 33889 / DSM 1251)), this protein is Sulfate adenylyltransferase subunit 2.